The following is a 602-amino-acid chain: Threonine--tRNA ligase (602 aa).

The segment at 208–499 is catalytic; that stretch reads DHRKLGIELK…LTEHCAGEFP (292 aa). Zn(2+) contacts are provided by Cys-300, His-351, and His-476.

The protein belongs to the class-II aminoacyl-tRNA synthetase family. As to quaternary structure, homodimer. Requires Zn(2+) as cofactor.

It is found in the cytoplasm. It catalyses the reaction tRNA(Thr) + L-threonine + ATP = L-threonyl-tRNA(Thr) + AMP + diphosphate + H(+). Catalyzes the attachment of threonine to tRNA(Thr) in a two-step reaction: L-threonine is first activated by ATP to form Thr-AMP and then transferred to the acceptor end of tRNA(Thr). Also edits incorrectly charged L-seryl-tRNA(Thr). The chain is Threonine--tRNA ligase from Campylobacter jejuni subsp. doylei (strain ATCC BAA-1458 / RM4099 / 269.97).